A 396-amino-acid polypeptide reads, in one-letter code: Stearoyl-[acyl-carrier-protein] 9-desaturase, chloroplastic (396 aa).

A chloroplast-targeting transit peptide spans 1 to 32 (MALKLNPVTTFPSTRSLNNFSSRSPRTFLMAA). Fe cation-binding residues include Glu-138, Glu-176, His-179, Glu-229, Glu-262, and His-265.

This sequence belongs to the fatty acid desaturase type 2 family. Homodimer. Fe(2+) serves as cofactor.

The protein resides in the plastid. It is found in the chloroplast. It carries out the reaction octadecanoyl-[ACP] + 2 reduced [2Fe-2S]-[ferredoxin] + O2 + 2 H(+) = (9Z)-octadecenoyl-[ACP] + 2 oxidized [2Fe-2S]-[ferredoxin] + 2 H2O. Its pathway is lipid metabolism; fatty acid metabolism. Functionally, converts stearoyl-ACP to oleoyl-ACP by introduction of a cis double bond between carbons 9 and 10 of the acyl chain. The chain is Stearoyl-[acyl-carrier-protein] 9-desaturase, chloroplastic from Linum usitatissimum (Flax).